Consider the following 138-residue polypeptide: Phosphoribosyl-AMP cyclohydrolase (138 aa).

Aspartate 86 serves as a coordination point for Mg(2+). Cysteine 87 is a binding site for Zn(2+). Residues aspartate 88 and aspartate 90 each coordinate Mg(2+). 2 residues coordinate Zn(2+): cysteine 104 and cysteine 111.

This sequence belongs to the PRA-CH family. Homodimer. Mg(2+) serves as cofactor. The cofactor is Zn(2+).

Its subcellular location is the cytoplasm. The enzyme catalyses 1-(5-phospho-beta-D-ribosyl)-5'-AMP + H2O = 1-(5-phospho-beta-D-ribosyl)-5-[(5-phospho-beta-D-ribosylamino)methylideneamino]imidazole-4-carboxamide. The protein operates within amino-acid biosynthesis; L-histidine biosynthesis; L-histidine from 5-phospho-alpha-D-ribose 1-diphosphate: step 3/9. Functionally, catalyzes the hydrolysis of the adenine ring of phosphoribosyl-AMP. The chain is Phosphoribosyl-AMP cyclohydrolase from Marinobacter nauticus (strain ATCC 700491 / DSM 11845 / VT8) (Marinobacter aquaeolei).